A 270-amino-acid polypeptide reads, in one-letter code: Orotidine 5'-phosphate decarboxylase (270 aa).

Residues Asp41, 63-65 (KTH), 95-104 (DRKFADIGNT), Tyr221, and Arg239 each bind substrate. Lys97 acts as the Proton donor in catalysis.

It belongs to the OMP decarboxylase family.

The catalysed reaction is orotidine 5'-phosphate + H(+) = UMP + CO2. Its pathway is pyrimidine metabolism; UMP biosynthesis via de novo pathway; UMP from orotate: step 2/2. This chain is Orotidine 5'-phosphate decarboxylase (URA3), found in Candida boidinii (Yeast).